The chain runs to 497 residues: MASLLHKFLENASGKKGQDLASTAYLAALDHLLHSFPSIGKSVIDELKGQRSRLKMIASENYASISVQLAMGNLLTDKYCEGSPFKRFYSCCENVDAIEWECAETAKELFGAESAFVQPHSGADANLLAMMAIITQKIQGPAVKRLGYKTINDLTDKEYAELKAEIGSHVCLGPSLNSGGHLTHGTVRMNVMSKLMRCLPYEVNKKTERFDYAEIARLVRTHKPTVLVAGYSSYSRRLNFSTLKQIADDCGAVLWVDMAHFAGLVAGGVFVEEENPIPFADIVTTTTHKTLRGPRGGLVLASKEYDGIINRACPLMMGGPLPHVIAAKAVALKEALTVDFKKYAHQVVDNARTLAEHFQKQGLRLLTGGTDNHMLIIDLTSLGISGRIAEDILSSIGIAVNRNTIPSDAVGKWDTSGIRLGTPALTTLGMGSDEMEEVANIIVKVLRNITLRRNADDSFSKSEGELPENIAQEARARVADLLSRFPLYPEIDLETLV.

(6S)-5,6,7,8-tetrahydrofolate-binding positions include L176 and 180 to 182 (GHL). At K289 the chain carries N6-(pyridoxal phosphate)lysine.

This sequence belongs to the SHMT family. As to quaternary structure, homodimer. It depends on pyridoxal 5'-phosphate as a cofactor.

Its subcellular location is the cytoplasm. The catalysed reaction is (6R)-5,10-methylene-5,6,7,8-tetrahydrofolate + glycine + H2O = (6S)-5,6,7,8-tetrahydrofolate + L-serine. It functions in the pathway one-carbon metabolism; tetrahydrofolate interconversion. The protein operates within amino-acid biosynthesis; glycine biosynthesis; glycine from L-serine: step 1/1. In terms of biological role, catalyzes the reversible interconversion of serine and glycine with tetrahydrofolate (THF) serving as the one-carbon carrier. This reaction serves as the major source of one-carbon groups required for the biosynthesis of purines, thymidylate, methionine, and other important biomolecules. Also exhibits THF-independent aldolase activity toward beta-hydroxyamino acids, producing glycine and aldehydes, via a retro-aldol mechanism. This is Serine hydroxymethyltransferase from Chlamydia caviae (strain ATCC VR-813 / DSM 19441 / 03DC25 / GPIC) (Chlamydophila caviae).